Here is a 193-residue protein sequence, read N- to C-terminus: Probable nicotinate-nucleotide adenylyltransferase (193 aa).

Belongs to the NadD family.

The catalysed reaction is nicotinate beta-D-ribonucleotide + ATP + H(+) = deamido-NAD(+) + diphosphate. It functions in the pathway cofactor biosynthesis; NAD(+) biosynthesis; deamido-NAD(+) from nicotinate D-ribonucleotide: step 1/1. Catalyzes the reversible adenylation of nicotinate mononucleotide (NaMN) to nicotinic acid adenine dinucleotide (NaAD). This Borreliella afzelii (strain PKo) (Borrelia afzelii) protein is Probable nicotinate-nucleotide adenylyltransferase.